A 130-amino-acid chain; its full sequence is MAKDYSRTQRIGDQMQRELAQLIQREIKDPRLGLVTITGVEVSRDVAHAKVFITVMGQDDAGKIALNMEILNDAAGYLRMLLGKSMKLRSVPQLHFHYDESIRRGAELSALIERAVAEDGRRHGDDETED.

The protein belongs to the RbfA family. Monomer. Binds 30S ribosomal subunits, but not 50S ribosomal subunits or 70S ribosomes.

The protein resides in the cytoplasm. Functionally, one of several proteins that assist in the late maturation steps of the functional core of the 30S ribosomal subunit. Associates with free 30S ribosomal subunits (but not with 30S subunits that are part of 70S ribosomes or polysomes). Required for efficient processing of 16S rRNA. May interact with the 5'-terminal helix region of 16S rRNA. The sequence is that of Ribosome-binding factor A from Pseudomonas aeruginosa (strain LESB58).